We begin with the raw amino-acid sequence, 276 residues long: Pantothenate synthetase (276 aa).

ATP is bound at residue 26–33 (MGFLHAGH). The active-site Proton donor is His33. Residue Gln57 coordinates (R)-pantoate. Gln57 serves as a coordination point for beta-alanine. Residue 143-146 (GQKD) coordinates ATP. Gln149 is a (R)-pantoate binding site. Residues Ile172 and 180 to 183 (MSSR) each bind ATP.

It belongs to the pantothenate synthetase family. As to quaternary structure, homodimer.

It localises to the cytoplasm. It catalyses the reaction (R)-pantoate + beta-alanine + ATP = (R)-pantothenate + AMP + diphosphate + H(+). Its pathway is cofactor biosynthesis; (R)-pantothenate biosynthesis; (R)-pantothenate from (R)-pantoate and beta-alanine: step 1/1. In terms of biological role, catalyzes the condensation of pantoate with beta-alanine in an ATP-dependent reaction via a pantoyl-adenylate intermediate. The protein is Pantothenate synthetase of Herpetosiphon aurantiacus (strain ATCC 23779 / DSM 785 / 114-95).